A 201-amino-acid polypeptide reads, in one-letter code: UPF0098 protein MT1961 (201 aa).

The segment at 125 to 146 (TADGETPGGGISLPNSSGQPAY) is disordered.

Belongs to the UPF0098 family.

This Mycobacterium tuberculosis (strain CDC 1551 / Oshkosh) protein is UPF0098 protein MT1961.